Consider the following 179-residue polypeptide: ATP synthase subunit delta (179 aa).

This sequence belongs to the ATPase delta chain family. F-type ATPases have 2 components, F(1) - the catalytic core - and F(0) - the membrane proton channel. F(1) has five subunits: alpha(3), beta(3), gamma(1), delta(1), epsilon(1). F(0) has three main subunits: a(1), b(2) and c(10-14). The alpha and beta chains form an alternating ring which encloses part of the gamma chain. F(1) is attached to F(0) by a central stalk formed by the gamma and epsilon chains, while a peripheral stalk is formed by the delta and b chains.

The protein localises to the cell membrane. Its function is as follows. F(1)F(0) ATP synthase produces ATP from ADP in the presence of a proton or sodium gradient. F-type ATPases consist of two structural domains, F(1) containing the extramembraneous catalytic core and F(0) containing the membrane proton channel, linked together by a central stalk and a peripheral stalk. During catalysis, ATP synthesis in the catalytic domain of F(1) is coupled via a rotary mechanism of the central stalk subunits to proton translocation. In terms of biological role, this protein is part of the stalk that links CF(0) to CF(1). It either transmits conformational changes from CF(0) to CF(1) or is implicated in proton conduction. The polypeptide is ATP synthase subunit delta (Clostridium botulinum (strain Langeland / NCTC 10281 / Type F)).